We begin with the raw amino-acid sequence, 613 residues long: Acetylcholinesterase (613 aa).

An N-terminal signal peptide occupies residues M1–A30. A glycan (N-linked (GlcNAc...) asparagine) is linked at N91. C99 and C126 are disulfide-bonded. The Acyl-ester intermediate role is filled by S233. C287 and C302 are oxidised to a cystine. N295 is a glycosylation site (N-linked (GlcNAc...) asparagine). E364 functions as the Charge relay system in the catalytic mechanism. An N-linked (GlcNAc...) asparagine glycan is attached at N380. Residues C439 and C559 are joined by a disulfide bond. Residue H477 is the Charge relay system of the active site. A glycan (N-linked (GlcNAc...) asparagine) is linked at N494.

The protein belongs to the type-B carboxylesterase/lipase family. In terms of assembly, interacts with PRIMA1. The interaction with PRIMA1 is required to anchor it to the basal lamina of cells and organize into tetramers. Isoform H generates GPI-anchored dimers; disulfide linked. Isoform T generates multiple structures, ranging from monomers and dimers to collagen-tailed and hydrophobic-tailed forms, in which catalytic tetramers are associated with anchoring proteins that attach them to the basal lamina or to cell membranes. In the collagen-tailed forms, isoform T subunits are associated with a specific collagen, COLQ, which triggers the formation of isoform T tetramers, from monomers and dimers.

The protein localises to the synapse. Its subcellular location is the secreted. The protein resides in the cell membrane. It carries out the reaction acetylcholine + H2O = choline + acetate + H(+). Its function is as follows. Terminates signal transduction at the neuromuscular junction by rapid hydrolysis of the acetylcholine released into the synaptic cleft. This Bos taurus (Bovine) protein is Acetylcholinesterase (ACHE).